Here is a 397-residue protein sequence, read N- to C-terminus: Elongation factor Tu (397 aa).

Residues 10 to 206 (KPHCNIGTIG…TIDEYVPDPE (197 aa)) enclose the tr-type G domain. Positions 19–26 (GHVDHGKT) are G1. A GTP-binding site is contributed by 19-26 (GHVDHGKT). Position 26 (Thr26) interacts with Mg(2+). Residues 61 to 65 (GITIS) form a G2 region. Residues 82–85 (DCPG) are G3. Residues 82–86 (DCPGH) and 137–140 (NKCD) contribute to the GTP site. Residues 137–140 (NKCD) form a G4 region. Positions 175–177 (SAL) are G5.

This sequence belongs to the TRAFAC class translation factor GTPase superfamily. Classic translation factor GTPase family. EF-Tu/EF-1A subfamily. As to quaternary structure, monomer.

It localises to the cytoplasm. The enzyme catalyses GTP + H2O = GDP + phosphate + H(+). In terms of biological role, GTP hydrolase that promotes the GTP-dependent binding of aminoacyl-tRNA to the A-site of ribosomes during protein biosynthesis. The protein is Elongation factor Tu of Lachnospira eligens (strain ATCC 27750 / DSM 3376 / VPI C15-48 / C15-B4) (Eubacterium eligens).